Consider the following 177-residue polypeptide: R-phycoerythrin beta chain (177 aa).

Positions 35 and 39 each coordinate (2R,3E)-phycoerythrobilin. Positions 50, 54, and 61 each coordinate phycourobilin. (2R,3E)-phycoerythrobilin contacts are provided by residues Asn-72, 77–78 (RR), Cys-82, and 84–85 (RD). Residue Asn-72 is modified to N4-methylasparagine. 147 to 148 (SQ) contributes to the phycourobilin binding site. The (2R,3E)-phycoerythrobilin site is built by Ile-154 and Cys-158.

This sequence belongs to the phycobiliprotein family. Heterododecamer of 6 alpha and 6 beta chains. The basic functional unit of phycobiliproteins is a ring-shaped hexamer formed from two back-to-back trimers contacting via the alpha chain subunits. The trimers are composed of alpha/beta subunit heterodimers arranged around a three-fold axis of symmetry. The phycoerythrins also contain a gamma subunit which is located in the center of the hexamer. Post-translationally, contains two covalently linked phycoerythrobilin chromophores and one covalently linked phycourobilin chromophore.

Its subcellular location is the plastid. It is found in the chloroplast thylakoid membrane. Its function is as follows. Light-harvesting photosynthetic tetrapyrrole chromophore-protein from the phycobiliprotein complex. This Agarophyton chilense (Red seaweed) protein is R-phycoerythrin beta chain (rpeB).